The primary structure comprises 374 residues: MDGVGIVTTRFYEWSQCLHLESGAQLGSLTIAYETYGELNAAGNNAILVLHALTGNAHIAGRNFPDERYPGWWDPLVGPGRALDTRRYFIVCANVLGSCYGTTGPASINPATGKPYGMDFPAITIRDMVRAQKILLDYLGVKRLVAAIGGSMGGMQVLEWGFLYPQMLDAIIPIATCGRTTPMQIAFHHVQREAIYADPDWQGGNYYGTAGPRRGLALARQIGIITYKSDPSWNMKFGRNLVDPRKYFQLEGQFEVESYLAYQGRKLVDRFDANSYLYLTKAVDLHDVSQGRGSYNEVWRDFPCPCLGIGISSDFLFPPYQVQEIVRMINDGGGHARYAEIDSPYGHDAFLIEFNQLAAIIQPFLKELRPDLAA.

The 309-residue stretch at 45 to 353 folds into the AB hydrolase-1 domain; sequence NAILVLHALT…PYGHDAFLIE (309 aa). The Nucleophile role is filled by S151. R220 contributes to the substrate binding site. Residues D314 and H347 contribute to the active site. Residue D348 participates in substrate binding.

It belongs to the AB hydrolase superfamily. MetX family. Homodimer.

Its subcellular location is the cytoplasm. The catalysed reaction is L-homoserine + acetyl-CoA = O-acetyl-L-homoserine + CoA. Its pathway is amino-acid biosynthesis; L-methionine biosynthesis via de novo pathway; O-acetyl-L-homoserine from L-homoserine: step 1/1. Its function is as follows. Transfers an acetyl group from acetyl-CoA to L-homoserine, forming acetyl-L-homoserine. This is Homoserine O-acetyltransferase from Moorella thermoacetica (strain ATCC 39073 / JCM 9320).